The primary structure comprises 159 residues: SsrA-binding protein (159 aa).

Residues 137–159 (DKRETEKQRDWSREKGRLLKERG) are disordered.

This sequence belongs to the SmpB family.

Its subcellular location is the cytoplasm. Its function is as follows. Required for rescue of stalled ribosomes mediated by trans-translation. Binds to transfer-messenger RNA (tmRNA), required for stable association of tmRNA with ribosomes. tmRNA and SmpB together mimic tRNA shape, replacing the anticodon stem-loop with SmpB. tmRNA is encoded by the ssrA gene; the 2 termini fold to resemble tRNA(Ala) and it encodes a 'tag peptide', a short internal open reading frame. During trans-translation Ala-aminoacylated tmRNA acts like a tRNA, entering the A-site of stalled ribosomes, displacing the stalled mRNA. The ribosome then switches to translate the ORF on the tmRNA; the nascent peptide is terminated with the 'tag peptide' encoded by the tmRNA and targeted for degradation. The ribosome is freed to recommence translation, which seems to be the essential function of trans-translation. This chain is SsrA-binding protein, found in Mesorhizobium japonicum (strain LMG 29417 / CECT 9101 / MAFF 303099) (Mesorhizobium loti (strain MAFF 303099)).